Reading from the N-terminus, the 246-residue chain is UDP-N-acetyl-D-mannosaminuronic acid transferase (246 aa).

It belongs to the glycosyltransferase 26 family.

It carries out the reaction UDP-N-acetyl-alpha-D-mannosaminouronate + N-acetyl-alpha-D-glucosaminyl-di-trans,octa-cis-undecaprenyl diphosphate = beta-D-ManNAcA-(1-&gt;4)-alpha-D-GlcNAc-di-trans,octa-cis-undecaprenyl diphosphate + UDP + H(+). Its pathway is bacterial outer membrane biogenesis; enterobacterial common antigen biosynthesis. Functionally, catalyzes the synthesis of Und-PP-GlcNAc-ManNAcA (Lipid II), the second lipid-linked intermediate involved in enterobacterial common antigen (ECA) synthesis. The polypeptide is UDP-N-acetyl-D-mannosaminuronic acid transferase (Escherichia coli O1:K1 / APEC).